The sequence spans 203 residues: FMN-dependent NADH:quinone oxidoreductase 1 (203 aa).

FMN is bound by residues Ser-9, 15-17, 95-98, and 139-142; these read SAS, MYNF, and TAGG.

The protein belongs to the azoreductase type 1 family. As to quaternary structure, homodimer. FMN is required as a cofactor.

It catalyses the reaction 2 a quinone + NADH + H(+) = 2 a 1,4-benzosemiquinone + NAD(+). The catalysed reaction is N,N-dimethyl-1,4-phenylenediamine + anthranilate + 2 NAD(+) = 2-(4-dimethylaminophenyl)diazenylbenzoate + 2 NADH + 2 H(+). Functionally, quinone reductase that provides resistance to thiol-specific stress caused by electrophilic quinones. Its function is as follows. Also exhibits azoreductase activity. Catalyzes the reductive cleavage of the azo bond in aromatic azo compounds to the corresponding amines. The polypeptide is FMN-dependent NADH:quinone oxidoreductase 1 (Pseudomonas putida (strain ATCC 47054 / DSM 6125 / CFBP 8728 / NCIMB 11950 / KT2440)).